The following is a 608-amino-acid chain: DNA ligase (608 aa).

Position 266 (Glu266) interacts with ATP. The active-site N6-AMP-lysine intermediate is the Lys268. ATP-binding residues include Arg273, Arg288, Glu318, Phe358, Arg435, and Lys441.

Belongs to the ATP-dependent DNA ligase family. The cofactor is Mg(2+). Mn(2+) serves as cofactor.

It carries out the reaction ATP + (deoxyribonucleotide)n-3'-hydroxyl + 5'-phospho-(deoxyribonucleotide)m = (deoxyribonucleotide)n+m + AMP + diphosphate.. It catalyses the reaction ADP + (deoxyribonucleotide)n-3'-hydroxyl + 5'-phospho-(deoxyribonucleotide)m = (deoxyribonucleotide)n+m + AMP + phosphate.. The catalysed reaction is GTP + (deoxyribonucleotide)n-3'-hydroxyl + 5'-phospho-(deoxyribonucleotide)m = (deoxyribonucleotide)n+m + GMP + diphosphate.. In terms of biological role, DNA ligase that seals nicks in double-stranded DNA during DNA replication, DNA recombination and DNA repair. Can use ATP, ADP and GTP, but not CTP, TTP or NAD(+). The protein is DNA ligase of Hyperthermus butylicus (strain DSM 5456 / JCM 9403 / PLM1-5).